We begin with the raw amino-acid sequence, 330 residues long: MQTNLLKPKTINVEQLGHNRAKVALEPFERGYGHTLGNAIRRVLLSSMVGYAATEVTIAGVLHEYSSIDGVQEDVVNILLNLKGVVFKLHNRDEVTLSLRKDGEGVVTARDIQTPHDVEIVNPDHVIAHLSQGGKLDMQIKVEKGRGYVPGNLRRYADESTKSIGRIVLDASFSPVKRVSYTVESARVEQRTDLDKLVVEIETNGAITAEDAVRASAKILVEQLAVFAQLEGGELAAFDTPAGPRGSATFDPILLRPVDELELTVRSANCLKAENIYYIGDLIQRTENELLKTPNLGRKSLNEIKEVLASRGLTLGMKLENWPPAGLDKR.

The alpha N-terminal domain (alpha-NTD) stretch occupies residues 1–231 (MQTNLLKPKT…EQLAVFAQLE (231 aa)). An alpha C-terminal domain (alpha-CTD) region spans residues 250–330 (FDPILLRPVD…NWPPAGLDKR (81 aa)).

This sequence belongs to the RNA polymerase alpha chain family. In terms of assembly, homodimer. The RNAP catalytic core consists of 2 alpha, 1 beta, 1 beta' and 1 omega subunit. When a sigma factor is associated with the core the holoenzyme is formed, which can initiate transcription.

It carries out the reaction RNA(n) + a ribonucleoside 5'-triphosphate = RNA(n+1) + diphosphate. Functionally, DNA-dependent RNA polymerase catalyzes the transcription of DNA into RNA using the four ribonucleoside triphosphates as substrates. In Paracidovorax citrulli (strain AAC00-1) (Acidovorax citrulli), this protein is DNA-directed RNA polymerase subunit alpha.